Consider the following 75-residue polypeptide: DNA-directed RNA polymerase subunit omega (75 aa).

The protein belongs to the RNA polymerase subunit omega family. In terms of assembly, the RNAP catalytic core consists of 2 alpha, 1 beta, 1 beta' and 1 omega subunit. When a sigma factor is associated with the core the holoenzyme is formed, which can initiate transcription.

The catalysed reaction is RNA(n) + a ribonucleoside 5'-triphosphate = RNA(n+1) + diphosphate. Its function is as follows. Promotes RNA polymerase assembly. Latches the N- and C-terminal regions of the beta' subunit thereby facilitating its interaction with the beta and alpha subunits. The sequence is that of DNA-directed RNA polymerase subunit omega from Nitratidesulfovibrio vulgaris (strain DSM 19637 / Miyazaki F) (Desulfovibrio vulgaris).